The following is a 548-amino-acid chain: Adenine deaminase (548 aa).

It belongs to the metallo-dependent hydrolases superfamily. Adenine deaminase family. It depends on Mn(2+) as a cofactor.

The enzyme catalyses adenine + H2O + H(+) = hypoxanthine + NH4(+). The sequence is that of Adenine deaminase from Borreliella burgdorferi (strain ATCC 35210 / DSM 4680 / CIP 102532 / B31) (Borrelia burgdorferi).